The primary structure comprises 336 residues: Calcium-gated potassium channel MthK (336 aa).

The Cytoplasmic portion of the chain corresponds to 1–20 (MVLVIEIIRKHLPRVLKVPA). The chain crosses the membrane as a helical span at residues 21 to 41 (TRILLLVLAVIIYGTAGFHFI). Residues 42–48 (EGESWTV) are Extracellular-facing. The segment at residues 49–58 (SLYWTFVTIA) is an intramembrane region (helical; Pore-forming). An intramembrane region (pore-forming) is located at residues 59–64 (TVGYGD). The Selectivity filter signature appears at 59 to 64 (TVGYGD). At 65 to 69 (YSPST) the chain is on the extracellular side. The chain crosses the membrane as a helical span at residues 70–95 (PLGMYFTVTLIVLGIGTFAVAVERLL). Residues 96-106 (EFLINREQMKL) are Cytoplasmic-facing. An RCK N-terminal domain is found at 115–230 (SRHVVICGWS…RMAGADQVIS (116 aa)). Ca(2+) contacts are provided by Asp184, Glu210, and Glu212. The 85-residue stretch at 252–336 (VQDVLAEEST…IERLKNYISA (85 aa)) folds into the RCK C-terminal domain.

In terms of assembly, homotetramer.

The protein resides in the cell membrane. In terms of biological role, calcium-gated potassium channel. In Methanothermobacter thermautotrophicus (strain ATCC 29096 / DSM 1053 / JCM 10044 / NBRC 100330 / Delta H) (Methanobacterium thermoautotrophicum), this protein is Calcium-gated potassium channel MthK (mthK).